Consider the following 96-residue polypeptide: Large ribosomal subunit protein uL23 (96 aa).

Belongs to the universal ribosomal protein uL23 family. In terms of assembly, part of the 50S ribosomal subunit. Contacts protein L29, and trigger factor when it is bound to the ribosome.

In terms of biological role, one of the early assembly proteins it binds 23S rRNA. One of the proteins that surrounds the polypeptide exit tunnel on the outside of the ribosome. Forms the main docking site for trigger factor binding to the ribosome. The protein is Large ribosomal subunit protein uL23 of Bacillus mycoides (strain KBAB4) (Bacillus weihenstephanensis).